The chain runs to 502 residues: Rab11 family-interacting protein 4B (502 aa).

Disordered regions lie at residues 1–49 and 71–98; these read MSIQ…EEGI and SALS…TTSS. Over residues 15–29 the composition is skewed to basic and acidic residues; sequence EEGRGVERDSDRDSA. The span at 71 to 80 shows a compositional bias: polar residues; the sequence is SALSSASLNE. A compositionally biased stretch (acidic residues) spans 81-93; sequence EQFEDYGEGEDGD. The stretch at 228 to 482 forms a coiled coil; sequence DVKTKLKQEN…EEINLRLRQY (255 aa). Positions 439–501 constitute an FIP-RBD domain; it reads EAKNLFATQT…DHNPSILEIK (63 aa).

In terms of assembly, homodimer. Forms a complex with Rab11 (rab11a or rab11b) and arf6.

The protein localises to the recycling endosome membrane. It is found in the cleavage furrow. Its subcellular location is the midbody. It localises to the cytoplasmic vesicle. Functionally, acts as a regulator of endocytic traffic by participating in membrane delivery. Required for the abscission step in cytokinesis, possibly by acting as an 'address tag' delivering recycling endosome membranes to the cleavage furrow during late cytokinesis. In Danio rerio (Zebrafish), this protein is Rab11 family-interacting protein 4B (rab11fip4b).